The following is a 114-amino-acid chain: Methylamine utilization protein MauL (114 aa).

It participates in one-carbon metabolism; methylamine degradation. In terms of biological role, probably involved in TTQ prosthetic group biosynthesis. This Methylorubrum extorquens (strain ATCC 14718 / DSM 1338 / JCM 2805 / NCIMB 9133 / AM1) (Methylobacterium extorquens) protein is Methylamine utilization protein MauL (mauL).